The sequence spans 370 residues: Metalloproteinase (370 aa).

An N-terminal signal peptide occupies residues 1-15; the sequence is MYLAYIFFLFATVSA. Residues 170 to 370 enclose the Peptidase M12B domain; the sequence is IVIEVLLVTD…DNYGKIFRMF (201 aa). N-linked (GalNAc...) asparagine glycosylation occurs at asparagine 226. Position 320 (histidine 320) interacts with Zn(2+). Glutamate 321 is an active-site residue. Histidine 324 and histidine 330 together coordinate Zn(2+).

The protein belongs to the venom metalloproteinase (M12B) family. Expressed by the venom gland.

The protein resides in the secreted. Functionally, metalloprotease that may disrupt the cell matrix and the process of clotting blood or hemolymph. This chain is Metalloproteinase, found in Tityus obscurus (Amazonian scorpion).